Here is a 109-residue protein sequence, read N- to C-terminus: Ferredoxin (109 aa).

4Fe-4S ferredoxin-type domains are found at residues 2 to 30 and 31 to 60; these read TYVV…YEGE and FMLV…PESP. [3Fe-4S] cluster-binding residues include cysteine 9 and cysteine 17. Residues cysteine 21, cysteine 40, cysteine 43, and cysteine 46 each contribute to the [4Fe-4S] cluster site. Position 50 (cysteine 50) interacts with [3Fe-4S] cluster.

[4Fe-4S] cluster is required as a cofactor. The cofactor is [3Fe-4S] cluster.

Its function is as follows. Ferredoxins are iron-sulfur proteins that transfer electrons in a wide variety of metabolic reactions. The polypeptide is Ferredoxin (fdxA) (Rickettsia prowazekii (strain Madrid E)).